The following is a 131-amino-acid chain: Small ribosomal subunit protein uS11 (131 aa).

Belongs to the universal ribosomal protein uS11 family. As to quaternary structure, part of the 30S ribosomal subunit. Interacts with proteins S7 and S18. Binds to IF-3.

Its function is as follows. Located on the platform of the 30S subunit, it bridges several disparate RNA helices of the 16S rRNA. Forms part of the Shine-Dalgarno cleft in the 70S ribosome. The chain is Small ribosomal subunit protein uS11 from Saccharophagus degradans (strain 2-40 / ATCC 43961 / DSM 17024).